We begin with the raw amino-acid sequence, 418 residues long: Mitochondrial outer membrane protein SLC25A46 (418 aa).

2 positions are modified to phosphoserine: S32 and S35. Position 45 is a phosphothreonine (T45). The tract at residues P46–Q96 is disordered. Residues Q96–P187 form a Solcar 1 repeat. A run of 6 helical transmembrane segments spans residues F103–L123, F167–P187, H202–I222, L258–I278, F314–L334, and V382–I402. One copy of the Solcar 2 repeat lies at D311 to L413.

This sequence belongs to the mitochondrial carrier (TC 2.A.29) family. In terms of assembly, associates with the mitochondrial contact site and cristae organizing system (MICOS) complex. May associate with the endoplasmic reticulum membrane protein complex (EMC).

It is found in the mitochondrion outer membrane. In terms of biological role, transmembrane protein of the mitochondrial outer membrane that controls mitochondrial organization. May regulate the assembly of the MICOS (mitochondrial contact site and cristae organizing system) complex which is essential to the biogenesis and dynamics of mitochondrial cristae, the inwards folds of the inner mitochondrial membrane. Through its interaction with the EMC (endoplasmic reticulum membrane protein complex), could regulate mitochondrial lipid homeostasis and thereby mitochondrial fission. In Mus musculus (Mouse), this protein is Mitochondrial outer membrane protein SLC25A46.